We begin with the raw amino-acid sequence, 804 residues long: Probable exo-1,4-beta-xylosidase xlnD (804 aa).

The signal sequence occupies residues 1–26 (MAHSMSRPVAATAAALLALALPQALA). N-linked (GlcNAc...) asparagine glycans are attached at residues Asn-29, Asn-124, Asn-148, Asn-242, and Asn-251. The active site involves Asp-315. N-linked (GlcNAc...) asparagine glycans are attached at residues Asn-357, Asn-390, Asn-413, Asn-444, Asn-455, Asn-573, Asn-576, Asn-665, Asn-696, and Asn-718.

The protein belongs to the glycosyl hydrolase 3 family.

Its subcellular location is the secreted. The catalysed reaction is Hydrolysis of (1-&gt;4)-beta-D-xylans, to remove successive D-xylose residues from the non-reducing termini.. It participates in glycan degradation; xylan degradation. Its function is as follows. Xylan 1,4-beta-xylosidase involved in the hydrolysis of xylan, a major structural heterogeneous polysaccharide found in plant biomass representing the second most abundant polysaccharide in the biosphere, after cellulose. The protein is Probable exo-1,4-beta-xylosidase xlnD (xlnD) of Aspergillus niger (strain ATCC MYA-4892 / CBS 513.88 / FGSC A1513).